The following is a 240-amino-acid chain: Dihydromonapterin reductase (240 aa).

Y152 acts as the Proton acceptor in catalysis.

This sequence belongs to the short-chain dehydrogenases/reductases (SDR) family. FolM subfamily.

The enzyme catalyses (6S)-5,6,7,8-tetrahydrofolate + NADP(+) = 7,8-dihydrofolate + NADPH + H(+). It catalyses the reaction 7,8-dihydromonapterin + NADPH + H(+) = 5,6,7,8-tetrahydromonapterin + NADP(+). In terms of biological role, catalyzes the reduction of dihydromonapterin to tetrahydromonapterin. Also has lower activity with dihydrofolate. The protein is Dihydromonapterin reductase (folM) of Escherichia coli (strain SMS-3-5 / SECEC).